The following is a 625-amino-acid chain: 1-deoxy-D-xylulose-5-phosphate synthase (625 aa).

Thiamine diphosphate-binding positions include H80 and 121–123 (GHS). D152 is a binding site for Mg(2+). Thiamine diphosphate-binding positions include 153-154 (GA), N181, Y290, and E371. Mg(2+) is bound at residue N181.

Belongs to the transketolase family. DXPS subfamily. In terms of assembly, homodimer. Mg(2+) is required as a cofactor. It depends on thiamine diphosphate as a cofactor.

The catalysed reaction is D-glyceraldehyde 3-phosphate + pyruvate + H(+) = 1-deoxy-D-xylulose 5-phosphate + CO2. It functions in the pathway metabolic intermediate biosynthesis; 1-deoxy-D-xylulose 5-phosphate biosynthesis; 1-deoxy-D-xylulose 5-phosphate from D-glyceraldehyde 3-phosphate and pyruvate: step 1/1. In terms of biological role, catalyzes the acyloin condensation reaction between C atoms 2 and 3 of pyruvate and glyceraldehyde 3-phosphate to yield 1-deoxy-D-xylulose-5-phosphate (DXP). The protein is 1-deoxy-D-xylulose-5-phosphate synthase of Haemophilus influenzae (strain ATCC 51907 / DSM 11121 / KW20 / Rd).